A 445-amino-acid polypeptide reads, in one-letter code: Phosphoglucosamine mutase (445 aa).

Ser-99 acts as the Phosphoserine intermediate in catalysis. The Mg(2+) site is built by Ser-99, Asp-242, Asp-244, and Asp-246. Residue Ser-99 is modified to Phosphoserine.

The protein belongs to the phosphohexose mutase family. It depends on Mg(2+) as a cofactor. Activated by phosphorylation.

The catalysed reaction is alpha-D-glucosamine 1-phosphate = D-glucosamine 6-phosphate. Catalyzes the conversion of glucosamine-6-phosphate to glucosamine-1-phosphate. This Campylobacter jejuni subsp. jejuni serotype O:2 (strain ATCC 700819 / NCTC 11168) protein is Phosphoglucosamine mutase.